We begin with the raw amino-acid sequence, 413 residues long: Type II methyltransferase M.NaeI (413 aa).

An SAM-dependent MTase C5-type domain is found at 4 to 317 (LEVVEICAGA…KRIRAALNME (314 aa)). C78 is a catalytic residue.

Belongs to the class I-like SAM-binding methyltransferase superfamily. C5-methyltransferase family.

It catalyses the reaction a 2'-deoxycytidine in DNA + S-adenosyl-L-methionine = a 5-methyl-2'-deoxycytidine in DNA + S-adenosyl-L-homocysteine + H(+). In terms of biological role, a methylase that recognizes the double-stranded sequence 5'-GCCGGC-3', methylates C-? on both strands, and protects the DNA from cleavage by the NaeI endonuclease. The chain is Type II methyltransferase M.NaeI from Lentzea aerocolonigenes (Lechevalieria aerocolonigenes).